Here is a 553-residue protein sequence, read N- to C-terminus: Glycerol kinase 3 (553 aa).

Thr20 contributes to the substrate binding site. Arg24 contributes to the ATP binding site. Substrate is bound by residues Arg94, Tyr148, and Asp259. ATP is bound by residues Thr281, Gly326, and 427 to 431; that span reads GMTSN.

It belongs to the FGGY kinase family.

The protein localises to the mitochondrion outer membrane. The protein resides in the cytoplasm. It carries out the reaction glycerol + ATP = sn-glycerol 3-phosphate + ADP + H(+). The protein operates within polyol metabolism; glycerol degradation via glycerol kinase pathway; sn-glycerol 3-phosphate from glycerol: step 1/1. Its function is as follows. May be involved in the regulation of glycerol uptake and metabolism. This is Glycerol kinase 3 from Homo sapiens (Human).